Reading from the N-terminus, the 425-residue chain is MRLLLFNQNAFLLACMFVSSVYVNAVLDAYAIENPYISITLTSLLAPLSMLAFLKTPRNSAFALGFFVGALLFYWCALSFRYSDFTYLLPLIIVLIALVYGVLFYLLLYFENPYFRLLSFLGSSFIHPFGFDWLVPDSFFSYSVFRVDKLSLGLVFLACIFLSTKPLKKYRIIGVLLLLGALDFNGFKTSDLKKVGNIELVSTKTPQDLKFDSSYLNDIENNILKEIKLAQSKQKTLIVFPETAYPIALENSPFKAKLEDLSDNIAILIGTLRTQGYNLYNSSFLFSKESVQIADKVILAPFGETMPLPEFLQKPLEKLFFGESTYLYRNAPHFSDFTLDDFTFRPLICYEGTSKPAYSNSPSKIFIVMSNNAWFSPSIEPTLQRTLLKYYARRYDKIILHSANFSTSYILSPSLLGDILFRKRS.

Transmembrane regions (helical) follow at residues L12–I32, N34–L54, S60–F80, L88–L108, F120–F140, and Y142–L162. In terms of domain architecture, CN hydrolase spans V201 to S425. The Proton acceptor role is filled by E242. K296 is an active-site residue. The Nucleophile role is filled by C349.

This sequence belongs to the CN hydrolase family. Apolipoprotein N-acyltransferase subfamily.

It localises to the cell inner membrane. It carries out the reaction N-terminal S-1,2-diacyl-sn-glyceryl-L-cysteinyl-[lipoprotein] + a glycerophospholipid = N-acyl-S-1,2-diacyl-sn-glyceryl-L-cysteinyl-[lipoprotein] + a 2-acyl-sn-glycero-3-phospholipid + H(+). Its pathway is protein modification; lipoprotein biosynthesis (N-acyl transfer). In terms of biological role, catalyzes the phospholipid dependent N-acylation of the N-terminal cysteine of apolipoprotein, the last step in lipoprotein maturation. The sequence is that of Apolipoprotein N-acyltransferase from Helicobacter pylori (strain ATCC 700392 / 26695) (Campylobacter pylori).